Here is a 774-residue protein sequence, read N- to C-terminus: Beta-D-xylosidase 1 (774 aa).

Residues 1–30 (MSCYNKALLIGNKVVVILVFLLCLVHSSES) form the signal peptide. Asparagine 131 carries an N-linked (GlcNAc...) asparagine glycan. Aspartate 296 is a catalytic residue. A glycan (N-linked (GlcNAc...) asparagine) is linked at asparagine 658.

The protein belongs to the glycosyl hydrolase 3 family. As to expression, expressed in leaves, stems, seedlings, roots, inflorescences, siliques and developing seeds. Expressed in the vasculature of the roots, leaves, flowers and silique. Expressed in tissues undergoing secondary cell wall thickening such as protoxylem, metaxylem, intrafascicular cambium and fibers.

It is found in the secreted. It localises to the extracellular space. Its subcellular location is the extracellular matrix. It catalyses the reaction Hydrolysis of terminal non-reducing alpha-L-arabinofuranoside residues in alpha-L-arabinosides.. Its function is as follows. Involved in pectic arabinan modification in mucilage secretory cells. Also acts as a beta-D-xylosidase during the remodeling of xylans in vascular development. In Arabidopsis thaliana (Mouse-ear cress), this protein is Beta-D-xylosidase 1 (BXL1).